A 350-amino-acid chain; its full sequence is D-alanine--D-alanine ligase (350 aa).

Residues 135-335 (KLYAKNLGVK…LAQSLPKTPK (201 aa)) form the ATP-grasp domain. 164-219 (KPSFNFPFIVKPNNAGSSLGVSVVKEEKELAYALDGAFEYSKEVLIEPFIQRVKEY) is a binding site for ATP. Residues D291, E303, and N305 each contribute to the Mg(2+) site.

This sequence belongs to the D-alanine--D-alanine ligase family. Mg(2+) serves as cofactor. It depends on Mn(2+) as a cofactor.

It is found in the cytoplasm. The catalysed reaction is 2 D-alanine + ATP = D-alanyl-D-alanine + ADP + phosphate + H(+). It participates in cell wall biogenesis; peptidoglycan biosynthesis. Functionally, cell wall formation. The protein is D-alanine--D-alanine ligase of Helicobacter acinonychis (strain Sheeba).